A 184-amino-acid polypeptide reads, in one-letter code: Ribosome-recycling factor (184 aa).

It belongs to the RRF family.

Its subcellular location is the cytoplasm. Its function is as follows. Responsible for the release of ribosomes from messenger RNA at the termination of protein biosynthesis. May increase the efficiency of translation by recycling ribosomes from one round of translation to another. This chain is Ribosome-recycling factor, found in Caldicellulosiruptor bescii (strain ATCC BAA-1888 / DSM 6725 / KCTC 15123 / Z-1320) (Anaerocellum thermophilum).